A 100-amino-acid polypeptide reads, in one-letter code: Aspartyl/glutamyl-tRNA(Asn/Gln) amidotransferase subunit C (100 aa).

The protein belongs to the GatC family. Heterotrimer of A, B and C subunits.

The catalysed reaction is L-glutamyl-tRNA(Gln) + L-glutamine + ATP + H2O = L-glutaminyl-tRNA(Gln) + L-glutamate + ADP + phosphate + H(+). It carries out the reaction L-aspartyl-tRNA(Asn) + L-glutamine + ATP + H2O = L-asparaginyl-tRNA(Asn) + L-glutamate + ADP + phosphate + 2 H(+). In terms of biological role, allows the formation of correctly charged Asn-tRNA(Asn) or Gln-tRNA(Gln) through the transamidation of misacylated Asp-tRNA(Asn) or Glu-tRNA(Gln) in organisms which lack either or both of asparaginyl-tRNA or glutaminyl-tRNA synthetases. The reaction takes place in the presence of glutamine and ATP through an activated phospho-Asp-tRNA(Asn) or phospho-Glu-tRNA(Gln). The chain is Aspartyl/glutamyl-tRNA(Asn/Gln) amidotransferase subunit C from Streptococcus pneumoniae (strain JJA).